Consider the following 1079-residue polypeptide: Intraflagellar transport protein 80 (1079 aa).

Positions 495–514 (GDMIRPSTVQNQPSTQGLPN) are disordered. Positions 501–514 (STVQNQPSTQGLPN) are enriched in polar residues.

It localises to the cell projection. Its subcellular location is the cilium. The protein localises to the flagellum. The protein resides in the cytoplasm. It is found in the cytoskeleton. It localises to the flagellum axoneme. Its subcellular location is the flagellum basal body. Its function is as follows. Component of the intraflagellar transport complex B (IFT-B) involved in flagellar assembly. This chain is Intraflagellar transport protein 80, found in Giardia intestinalis (strain ATCC 50803 / WB clone C6) (Giardia lamblia).